Reading from the N-terminus, the 136-residue chain is uncharacterized protein (136 aa).

The signal sequence occupies residues 1–35 (MTHRAVPCQPRAFSKIKVLVISFLFLMVAFLPFSS).

This is an uncharacterized protein from Saccharomyces cerevisiae (strain ATCC 204508 / S288c) (Baker's yeast).